The chain runs to 224 residues: Synaptogyrin-2 (224 aa).

Met-1 carries the N-acetylmethionine modification. Phosphoserine is present on Ser-3. An MARVEL domain is found at 20 to 171; that stretch reads YVSQPQVVTR…LASLAYQRYK (152 aa). A run of 4 helical transmembrane segments spans residues 30–50, 73–93, 105–125, and 147–167; these read LVSM…GYIN, AIGV…AFFS, VIGD…GFCF, and AAIT…SLAY.

It belongs to the synaptogyrin family. Post-translationally, may be tyrosine phosphorylated by Src. As to expression, ubiquitously expressed with lower expression in brain (at protein level).

It is found in the cytoplasmic vesicle membrane. It localises to the cytoplasmic vesicle. The protein resides in the secretory vesicle. Its subcellular location is the synaptic vesicle membrane. May play a role in regulated exocytosis. In neuronal cells, modulates the localization of synaptophysin/SYP into synaptic-like microvesicles and may therefore play a role in the formation and/or the maturation of this vesicles. May also play a role in GLUT4 storage and transport to the plasma membrane. This Rattus norvegicus (Rat) protein is Synaptogyrin-2.